The chain runs to 229 residues: UPF0173 metal-dependent hydrolase SH1218 (229 aa).

It belongs to the UPF0173 family.

The protein is UPF0173 metal-dependent hydrolase SH1218 of Staphylococcus haemolyticus (strain JCSC1435).